Consider the following 545-residue polypeptide: Glucose-6-phosphate isomerase (545 aa).

The Proton donor role is filled by Glu-351. Catalysis depends on residues His-382 and Lys-510.

It belongs to the GPI family.

It is found in the cytoplasm. The catalysed reaction is alpha-D-glucose 6-phosphate = beta-D-fructose 6-phosphate. Its pathway is carbohydrate biosynthesis; gluconeogenesis. It functions in the pathway carbohydrate degradation; glycolysis; D-glyceraldehyde 3-phosphate and glycerone phosphate from D-glucose: step 2/4. Its function is as follows. Catalyzes the reversible isomerization of glucose-6-phosphate to fructose-6-phosphate. This Shewanella baltica (strain OS223) protein is Glucose-6-phosphate isomerase.